A 1408-amino-acid polypeptide reads, in one-letter code: ABC multidrug transporter MDR1 (1408 aa).

Residues 1–13 (MSASPSPIGAAAG) show a composition bias toward low complexity. Residues 1–103 (MSASPSPIGA…SISSAVPKSH (103 aa)) are disordered. A compositionally biased stretch (basic and acidic residues) spans 17 to 38 (LQARRDEEVVDSEKDALAHDSH). 2 consecutive transmembrane segments (helical) span residues 147 to 167 (FAAP…IAAG) and 223 to 243 (LYLM…MFIW). The ABC transmembrane type-1 1 domain occupies 157–464 (VFGLLLAIAA…LAPELAAVTK (308 aa)). Asn-244 carries an N-linked (GlcNAc...) asparagine glycan. 4 helical membrane-spanning segments follow: residues 296-316 (KVAL…LAFV), 321-341 (LAGA…IMMT), 408-428 (IMFF…GILV), and 436-456 (GIVI…AMLA). The 246-residue stretch at 499–744 (ISFENVRFHY…ENGPYAQLVN (246 aa)) folds into the ABC transporter 1 domain. Position 534 to 541 (534 to 541 (GASGSGKS)) interacts with ATP. A run of 2 helical transmembrane segments spans residues 838–858 (IFAF…AILF) and 882–902 (LWYF…SAGF). The ABC transmembrane type-1 2 domain maps to 838 to 1125 (IFAFIAAICA…VFTFVPDASK (288 aa)). The N-linked (GlcNAc...) asparagine glycan is linked to Asn-934. 4 consecutive transmembrane segments (helical) span residues 952–972 (GLFG…IGGC), 973–993 (IIGL…IPIL), 1072–1092 (GLTF…IIDG), and 1099–1119 (FYTV…VFTF). N-linked (GlcNAc...) asparagine glycans are attached at residues Asn-1127 and Asn-1182. The region spanning 1162–1402 (VRIEGVHFRY…KGGYYDLVQM (241 aa)) is the ABC transporter 2 domain. Residue 1197–1204 (GPSGCGKS) participates in ATP binding. Asn-1404 is a glycosylation site (N-linked (GlcNAc...) asparagine).

Belongs to the ABC transporter superfamily. ABCB family. Multidrug resistance exporter (TC 3.A.1.201) subfamily.

The protein resides in the cell membrane. It carries out the reaction itraconazole(in) + ATP + H2O = itraconazole(out) + ADP + phosphate + H(+). The enzyme catalyses voriconazole(in) + ATP + H2O = voriconazole(out) + ADP + phosphate + H(+). The catalysed reaction is fluconazole(in) + ATP + H2O = fluconazole(out) + ADP + phosphate + H(+). Functionally, pleiotropic ABC efflux transporter that confers resistance to structurally and functionally unrelated compounds including azoles such as fluconazole (FLC), itraconazole (ITC), posaconazole (POS), nocodazole and voriconazole (VRC). The chain is ABC multidrug transporter MDR1 from Cryptococcus deuterogattii (strain R265) (Cryptococcus gattii VGII (strain R265)).